The chain runs to 117 residues: uncharacterized protein (117 aa).

The next 3 helical transmembrane spans lie at 32 to 52 (VSSS…VTVV), 56 to 76 (VGVA…VTLL), and 87 to 107 (LSWC…SFFF).

The protein resides in the membrane. This is an uncharacterized protein from Saccharomyces cerevisiae (strain ATCC 204508 / S288c) (Baker's yeast).